Consider the following 202-residue polypeptide: GTP cyclohydrolase 1 (202 aa).

Zn(2+) contacts are provided by C90, H93, and C163.

It belongs to the GTP cyclohydrolase I family. Homomer.

It catalyses the reaction GTP + H2O = 7,8-dihydroneopterin 3'-triphosphate + formate + H(+). The protein operates within cofactor biosynthesis; 7,8-dihydroneopterin triphosphate biosynthesis; 7,8-dihydroneopterin triphosphate from GTP: step 1/1. The sequence is that of GTP cyclohydrolase 1 from Mycobacterium marinum (strain ATCC BAA-535 / M).